The following is a 372-amino-acid chain: Chloromuconate cycloisomerase (372 aa).

Lys158 serves as the catalytic Proton acceptor. The Mn(2+) site is built by Asp187, Glu213, and Asp238. The active-site Proton donor is Glu316.

It belongs to the mandelate racemase/muconate lactonizing enzyme family. Mn(2+) serves as cofactor.

It carries out the reaction 2-[(2R)-2-chloro-2,5-dihydro-5-oxofuryl]acetate = 3-chloro-cis,cis-muconate + H(+). The protein operates within aromatic compound metabolism; 3-chlorocatechol degradation. This Cupriavidus pinatubonensis (strain JMP 134 / LMG 1197) (Cupriavidus necator (strain JMP 134)) protein is Chloromuconate cycloisomerase (tfdDII).